A 110-amino-acid polypeptide reads, in one-letter code: uncharacterized protein (110 aa).

The protein belongs to the HesB/IscA family.

This is an uncharacterized protein from Rickettsia prowazekii (strain Madrid E).